We begin with the raw amino-acid sequence, 523 residues long: 2,3-bisphosphoglycerate-independent phosphoglycerate mutase (523 aa).

Residues Asp-13 and Ser-63 each contribute to the Mn(2+) site. Catalysis depends on Ser-63, which acts as the Phosphoserine intermediate. Residues His-124, 156-157 (RD), Arg-188, Arg-194, 268-271 (RSDR), and Lys-341 contribute to the substrate site. Residues Asp-408, His-412, Asp-449, His-450, and His-467 each contribute to the Mn(2+) site.

Belongs to the BPG-independent phosphoglycerate mutase family. In terms of assembly, monomer. Mn(2+) serves as cofactor.

The enzyme catalyses (2R)-2-phosphoglycerate = (2R)-3-phosphoglycerate. It functions in the pathway carbohydrate degradation; glycolysis; pyruvate from D-glyceraldehyde 3-phosphate: step 3/5. Catalyzes the interconversion of 2-phosphoglycerate and 3-phosphoglycerate. This chain is 2,3-bisphosphoglycerate-independent phosphoglycerate mutase, found in Salinibacter ruber (strain DSM 13855 / M31).